The sequence spans 318 residues: MNYQVLLYYKYTTIDDPEQFAQDHLAFCKAHHLKGRILVSTEGINGTLSGTKEETEQYMAHMHADERFKDMVFKIDEAEGHAFKKMHVRPRKEIVALDLEDDVDPRHTTGQYLSPVEFRKALEDDDTVIIDARNDYEFDLGHFRGAIRPDITRFRDLPDWIKENKALFTDKKVVTYCTGGIRCEKFSGWLLKEGFEDVAQLHGGIATYGKDPETKGQYWDGKMYVFDDRISVDINQVEKTIIGKDWFDGKPCERYINCANPECNKQILVSEENETKYLGACSYECAKHERNRYVQANNISDNEWQQRLTNFDDLHQHA.

Residues 123–217 (EDDDTVIIDA…YGKDPETKGQ (95 aa)) form the Rhodanese domain. Cys-177 serves as the catalytic Cysteine persulfide intermediate.

The protein belongs to the TrhO family.

It carries out the reaction uridine(34) in tRNA + AH2 + O2 = 5-hydroxyuridine(34) in tRNA + A + H2O. Functionally, catalyzes oxygen-dependent 5-hydroxyuridine (ho5U) modification at position 34 in tRNAs. This Staphylococcus aureus (strain Mu3 / ATCC 700698) protein is tRNA uridine(34) hydroxylase.